Consider the following 272-residue polypeptide: Phosphoglycolate phosphatase (272 aa).

D19 acts as the Nucleophile in catalysis. D19, D21, and D182 together coordinate Mg(2+).

The protein belongs to the HAD-like hydrolase superfamily. CbbY/CbbZ/Gph/YieH family. The cofactor is Mg(2+).

It carries out the reaction 2-phosphoglycolate + H2O = glycolate + phosphate. It functions in the pathway organic acid metabolism; glycolate biosynthesis; glycolate from 2-phosphoglycolate: step 1/1. Specifically catalyzes the dephosphorylation of 2-phosphoglycolate. Is involved in the dissimilation of the intracellular 2-phosphoglycolate formed during the DNA repair of 3'-phosphoglycolate ends, a major class of DNA lesions induced by oxidative stress. This Pseudomonas syringae pv. tomato (strain ATCC BAA-871 / DC3000) protein is Phosphoglycolate phosphatase.